Consider the following 368-residue polypeptide: Quinolinate synthase (368 aa).

Iminosuccinate is bound by residues His-46 and Ser-63. Cys-110 is a binding site for [4Fe-4S] cluster. Residues 141–143 (YVN) and Ser-162 each bind iminosuccinate. Residue Cys-230 participates in [4Fe-4S] cluster binding. Iminosuccinate is bound by residues 256-258 (HPE) and Thr-273. Cys-320 lines the [4Fe-4S] cluster pocket.

The protein belongs to the quinolinate synthase family. Type 3 subfamily. [4Fe-4S] cluster is required as a cofactor.

The protein resides in the cytoplasm. The enzyme catalyses iminosuccinate + dihydroxyacetone phosphate = quinolinate + phosphate + 2 H2O + H(+). Its pathway is cofactor biosynthesis; NAD(+) biosynthesis; quinolinate from iminoaspartate: step 1/1. Catalyzes the condensation of iminoaspartate with dihydroxyacetone phosphate to form quinolinate. The chain is Quinolinate synthase from Bacillus cereus (strain ATCC 14579 / DSM 31 / CCUG 7414 / JCM 2152 / NBRC 15305 / NCIMB 9373 / NCTC 2599 / NRRL B-3711).